The following is a 245-amino-acid chain: 3-deoxy-manno-octulosonate cytidylyltransferase (245 aa).

Belongs to the KdsB family.

It localises to the cytoplasm. The catalysed reaction is 3-deoxy-alpha-D-manno-oct-2-ulosonate + CTP = CMP-3-deoxy-beta-D-manno-octulosonate + diphosphate. It participates in nucleotide-sugar biosynthesis; CMP-3-deoxy-D-manno-octulosonate biosynthesis; CMP-3-deoxy-D-manno-octulosonate from 3-deoxy-D-manno-octulosonate and CTP: step 1/1. Its pathway is bacterial outer membrane biogenesis; lipopolysaccharide biosynthesis. Functionally, activates KDO (a required 8-carbon sugar) for incorporation into bacterial lipopolysaccharide in Gram-negative bacteria. This Fusobacterium nucleatum subsp. nucleatum (strain ATCC 25586 / DSM 15643 / BCRC 10681 / CIP 101130 / JCM 8532 / KCTC 2640 / LMG 13131 / VPI 4355) protein is 3-deoxy-manno-octulosonate cytidylyltransferase.